A 131-amino-acid polypeptide reads, in one-letter code: Peptide methionine sulfoxide reductase MsrB (131 aa).

The MsrB domain occupies 9-131 (DEDWKKELTP…NSASLKFQKE (123 aa)). Zn(2+) is bound by residues Cys-48, Cys-51, Cys-97, and Cys-100. Cys-120 acts as the Nucleophile in catalysis.

The protein belongs to the MsrB Met sulfoxide reductase family. It depends on Zn(2+) as a cofactor.

It catalyses the reaction L-methionyl-[protein] + [thioredoxin]-disulfide + H2O = L-methionyl-(R)-S-oxide-[protein] + [thioredoxin]-dithiol. This Leptospira interrogans serogroup Icterohaemorrhagiae serovar Lai (strain 56601) protein is Peptide methionine sulfoxide reductase MsrB.